The primary structure comprises 316 residues: Ribose-phosphate pyrophosphokinase (316 aa).

Residues 42–44 (DGE) and 101–102 (RQ) each bind ATP. Mg(2+) is bound by residues His-135 and Asp-174. The active site involves Lys-197. D-ribose 5-phosphate-binding positions include Arg-199, Asp-223, and 227 to 231 (DTAGT).

Belongs to the ribose-phosphate pyrophosphokinase family. Class I subfamily. In terms of assembly, homohexamer. The cofactor is Mg(2+).

It localises to the cytoplasm. It carries out the reaction D-ribose 5-phosphate + ATP = 5-phospho-alpha-D-ribose 1-diphosphate + AMP + H(+). Its pathway is metabolic intermediate biosynthesis; 5-phospho-alpha-D-ribose 1-diphosphate biosynthesis; 5-phospho-alpha-D-ribose 1-diphosphate from D-ribose 5-phosphate (route I): step 1/1. Its function is as follows. Involved in the biosynthesis of the central metabolite phospho-alpha-D-ribosyl-1-pyrophosphate (PRPP) via the transfer of pyrophosphoryl group from ATP to 1-hydroxyl of ribose-5-phosphate (Rib-5-P). The protein is Ribose-phosphate pyrophosphokinase of Halalkalibacterium halodurans (strain ATCC BAA-125 / DSM 18197 / FERM 7344 / JCM 9153 / C-125) (Bacillus halodurans).